We begin with the raw amino-acid sequence, 226 residues long: Isoprenyl transferase (226 aa).

Aspartate 12 is a catalytic residue. Aspartate 12 is a Mg(2+) binding site. Substrate is bound by residues 13–16, tryptophan 17, lysine 25, histidine 29, and 57–59; these read GNAR and SFE. Residue asparagine 60 is the Proton acceptor of the active site. Substrate contacts are provided by residues tryptophan 61, arginine 63, arginine 174, and 180-182; that span reads RIS. A Mg(2+)-binding site is contributed by glutamate 193.

This sequence belongs to the UPP synthase family. In terms of assembly, homodimer. It depends on Mg(2+) as a cofactor.

Catalyzes the condensation of isopentenyl diphosphate (IPP) with allylic pyrophosphates generating different type of terpenoids. This chain is Isoprenyl transferase, found in Rickettsia prowazekii (strain Madrid E).